Here is a 187-residue protein sequence, read N- to C-terminus: Elongation factor P (187 aa).

Belongs to the elongation factor P family.

It localises to the cytoplasm. It functions in the pathway protein biosynthesis; polypeptide chain elongation. Involved in peptide bond synthesis. Stimulates efficient translation and peptide-bond synthesis on native or reconstituted 70S ribosomes in vitro. Probably functions indirectly by altering the affinity of the ribosome for aminoacyl-tRNA, thus increasing their reactivity as acceptors for peptidyl transferase. In Mycobacterium marinum (strain ATCC BAA-535 / M), this protein is Elongation factor P.